Here is a 518-residue protein sequence, read N- to C-terminus: MIEDISKKIAWLKKNPKMLKGIFRGIERETLRIQKNGHFSKTIHPYLIGSSLTHKWITTDFSENLLEFITPTSDNIDYLLSFLTDLHSFTASKIKNERMWPFSIPYCFNDQTNIQIAQYGKSNIGKMKTTYRIGLKNRYGDLINTISGIHYNFSLPLFFWTNWENNQNKKNNTDLISSGYLNLIRNYYRFGWIVPYLFGSSPAISSFFLKNTKKKYKFKKNKEDIFYLPWSTSLRLSDIGYSNTNILDLNIMFNDFNEYIESFQNALKTPSKKFINIGLKDEHGNFKQLNTNILQIENELYTQIRPKRKTKDGESLLEALKNRGIEYVEIRSLDVNPFSPIGINKNQILLLDLFLIWCALIDSPKIDKTDFLLTTKNWERIIYEGRKPNQKIYINNNNETKTLIEIGQIIFKDLNEIALILDSNSNDLLYQKACKETQLFLKNPELTYSAQCLNFLMTTGIKKTGLYLANKYHEKFINKNYFNLNQSVLEQEVIRSHQKKIEIEREDILSFEEYIRNK.

The protein belongs to the glutamate--cysteine ligase type 1 family. Type 1 subfamily.

It catalyses the reaction L-cysteine + L-glutamate + ATP = gamma-L-glutamyl-L-cysteine + ADP + phosphate + H(+). Its pathway is sulfur metabolism; glutathione biosynthesis; glutathione from L-cysteine and L-glutamate: step 1/2. In Buchnera aphidicola subsp. Acyrthosiphon pisum (strain APS) (Acyrthosiphon pisum symbiotic bacterium), this protein is Glutamate--cysteine ligase (gshA).